A 208-amino-acid polypeptide reads, in one-letter code: Proteasome subunit beta 2 (208 aa).

The propeptide at 1-9 is removed in mature form; by autocatalysis; that stretch reads MSGKKIVSK. Residue Thr-10 is the Nucleophile of the active site.

The protein belongs to the peptidase T1B family. As to quaternary structure, the 20S proteasome core is composed of 14 alpha and 14 beta subunits that assemble into four stacked heptameric rings, resulting in a barrel-shaped structure. The two inner rings, each composed of seven catalytic beta subunits, are sandwiched by two outer rings, each composed of seven alpha subunits. The catalytic chamber with the active sites is on the inside of the barrel. Has a gated structure, the ends of the cylinder being occluded by the N-termini of the alpha-subunits. Is capped at one or both ends by the proteasome regulatory ATPase, PAN.

The protein localises to the cytoplasm. The enzyme catalyses Cleavage of peptide bonds with very broad specificity.. With respect to regulation, the formation of the proteasomal ATPase PAN-20S proteasome complex, via the docking of the C-termini of PAN into the intersubunit pockets in the alpha-rings, triggers opening of the gate for substrate entry. Interconversion between the open-gate and close-gate conformations leads to a dynamic regulation of the 20S proteasome proteolysis activity. In terms of biological role, component of the proteasome core, a large protease complex with broad specificity involved in protein degradation. The polypeptide is Proteasome subunit beta 2 (Staphylothermus marinus (strain ATCC 43588 / DSM 3639 / JCM 9404 / F1)).